Here is a 258-residue protein sequence, read N- to C-terminus: Proteasome subunit beta type-1 (258 aa).

The protein belongs to the peptidase T1B family. As to quaternary structure, the 26S proteasome consists of a 20S proteasome core and two 19S regulatory subunits. The 20S proteasome core is composed of 28 subunits that are arranged in four stacked rings, resulting in a barrel-shaped structure. The two end rings are each formed by seven alpha subunits, and the two central rings are each formed by seven beta subunits. The catalytic chamber with the active sites is on the inside of the barrel.

The protein resides in the cytoplasm. It localises to the nucleus. Non-catalytic component of the proteasome, a multicatalytic proteinase complex which is characterized by its ability to cleave peptides with Arg, Phe, Tyr, Leu, and Glu adjacent to the leaving group at neutral or slightly basic pH. The proteasome has an ATP-dependent proteolytic activity. The chain is Proteasome subunit beta type-1 (pbs-6) from Caenorhabditis elegans.